A 378-amino-acid polypeptide reads, in one-letter code: Putative zinc finger protein C09F5.3 (378 aa).

The span at 1-14 (MRKTEKMKRPHNSS) shows a compositional bias: basic residues. Disordered regions lie at residues 1–36 (MRKTEKMKRPHNSSHVKQEERADDSHSNSPASSKSI) and 61–80 (TLSEHVPEKKPSISTSNSAP). 2 stretches are compositionally biased toward basic and acidic residues: residues 16–26 (VKQEERADDSH) and 62–71 (LSEHVPEKKP). The C2H2-type 1 zinc finger occupies 42-65 (LKCELCSTVCSSISQLQSHTLSEH). The segment at 85 to 107 (VACQQCEDTFEDFAQFAIHMKSH) adopts a C2H2-type 2; degenerate zinc-finger fold. A C2H2-type 3; degenerate zinc finger spans residues 204–226 (YGCALCATSYPSQLHLITHVQMS). The tract at residues 231–250 (TFYPPSLPIPTPPSPKSTPK) is disordered. Positions 235 to 246 (PSLPIPTPPSPK) are enriched in pro residues. 4 C2H2-type zinc fingers span residues 254–277 (LQCSVCDESVLGEDGLDEHRLRKH), 284–306 (DKCADCQEPLLNETSFVEHCLRH), 312–334 (HHCPVCRQSLRSDSQIHAHCAYH), and 355–377 (FVCPICGEKLDDGFALIEHTKIH).

The protein localises to the nucleus. In Caenorhabditis elegans, this protein is Putative zinc finger protein C09F5.3.